Here is a 43-residue protein sequence, read N- to C-terminus: Myotoxin-2 (43 aa).

Intrachain disulfides connect cysteine 4/cysteine 36, cysteine 11/cysteine 30, and cysteine 18/cysteine 37.

Belongs to the crotamine-myotoxin family. As to quaternary structure, monomer. Expressed by the venom gland.

The protein localises to the secreted. In terms of biological role, cationic peptide that possesses multiple functions. It acts as a cell-penetrating peptide (CPP), and as a potent voltage-gated potassium channel (Kv) inhibitor. It exhibits antimicrobial activities, hind limb paralysis, and severe muscle necrosis by a non-enzymatic mechanism. This Crotalus concolor (Midget faded rattlesnake) protein is Myotoxin-2.